A 434-amino-acid polypeptide reads, in one-letter code: APETALA2-like protein 2 (434 aa).

The disordered stretch occupies residues 1–116 (MLLDLNVESP…KTRRGPRSRS (116 aa)). The segment covering 12–23 (RSGTSSSSVLNS) has biased composition (low complexity). Residues 25–38 (DAGGGGGGGGGGGL) show a composition bias toward gly residues. Residues 72–87 (LPPPPPAAPSPAPAWQ) show a composition bias toward pro residues. Residues 104–113 (VAKKTRRGPR) are compositionally biased toward basic residues. The Nuclear localization signal signature appears at 106-115 (KKTRRGPRSR). DNA-binding regions (AP2/ERF) lie at residues 118–174 (QYRG…INFN) and 210–267 (KFRG…TNFE). Residues 291-295 (LDLRI) carry the EAR motif.

The protein belongs to the AP2/ERF transcription factor family. AP2 subfamily. May form homodimer. Interacts with TPR2/ASP1. Highly expressed in developing panicles and in young seedlings. Present at low levels at all developmental stages.

It is found in the nucleus. In terms of biological role, probable transcription factor. Involved in spikelet transition. Together with SNB, controls synergistically inflorescence architecture and floral meristem establishment via the regulation of spatio-temporal expression of B- and E-function floral organ identity genes in the lodicules and of spikelet meristem genes. Prevents lemma and palea elongation as well as grain growth. The polypeptide is APETALA2-like protein 2 (Oryza sativa subsp. japonica (Rice)).